A 438-amino-acid chain; its full sequence is 2-(3-amino-3-carboxypropyl)histidine synthase subunit 1 (438 aa).

The interval 1–24 (MAALVVSETAEPGSRVGPGRGRIS) is disordered. 3 residues coordinate [4Fe-4S] cluster: C110, C214, and C342. The tract at residues 402 to 438 (LCQPASDKVQQGSRGGSPAPACESCNCADQKATSPAP) is disordered. S418 carries the post-translational modification Phosphoserine.

The protein belongs to the DPH1/DPH2 family. DPH1 subfamily. In terms of assembly, component of the 2-(3-amino-3-carboxypropyl)histidine synthase complex composed of DPH1, DPH2, DPH3 and a NADH-dependent reductase. Interacts with DPH2. Interacts with RBM8A. [4Fe-4S] cluster is required as a cofactor. As to expression, strongly expressed in kidney and liver. Moderately expressed in brain, skin and testis. Weakly expressed in heart, lung, small intestine, spleen, stomach and thymus.

The protein localises to the nucleus. The protein resides in the cytoplasm. The enzyme catalyses L-histidyl-[translation elongation factor 2] + S-adenosyl-L-methionine = 2-[(3S)-amino-3-carboxypropyl]-L-histidyl-[translation elongation factor 2] + S-methyl-5'-thioadenosine + H(+). It participates in protein modification; peptidyl-diphthamide biosynthesis. Catalyzes the first step of diphthamide biosynthesis, a post-translational modification of histidine which occurs in elongation factor 2. DPH1 and DPH2 transfer a 3-amino-3-carboxypropyl (ACP) group from S-adenosyl-L-methionine (SAM) to a histidine residue, the reaction is assisted by a reduction system comprising DPH3 and a NADH-dependent reductase. Acts as a tumor suppressor. The chain is 2-(3-amino-3-carboxypropyl)histidine synthase subunit 1 from Mus musculus (Mouse).